Consider the following 256-residue polypeptide: MNLDALQQRLGYRFSKPELLQQALTHRSHSAQHNERLEFLGDSVLNCAVADMLYGMFGKLDEGDLSRVRANLVKQQALYEIAQMLQLSDTLRLGEGELKSGGFRRPSILADALEAIVGAVFLDAGFDAARALIRKLYIPILEQVDPRTLGKDAKTLLQEYLQGHKIALPQYNVIATHGAAHSQQFEVECTVPKLEVRVFGTGASRRAAEQAAAKLALDEVQKLVPQLLKRSRAERTGKTRKQPVPQDPQLSLRLKE.

An RNase III domain is found at 3–125 (LDALQQRLGY…IVGAVFLDAG (123 aa)). Glu38 lines the Mg(2+) pocket. Residue Asp42 is part of the active site. Mg(2+) is bound by residues Asp111 and Glu114. Glu114 is an active-site residue. The DRBM domain maps to 152-222 (DAKTLLQEYL…AKLALDEVQK (71 aa)). Residues 230–256 (RSRAERTGKTRKQPVPQDPQLSLRLKE) are disordered.

This sequence belongs to the ribonuclease III family. Homodimer. Mg(2+) is required as a cofactor.

Its subcellular location is the cytoplasm. The enzyme catalyses Endonucleolytic cleavage to 5'-phosphomonoester.. Digests double-stranded RNA. Involved in the processing of primary rRNA transcript to yield the immediate precursors to the large and small rRNAs (23S and 16S). Processes some mRNAs, and tRNAs when they are encoded in the rRNA operon. Processes pre-crRNA and tracrRNA of type II CRISPR loci if present in the organism. The polypeptide is Ribonuclease 3 (Cupriavidus necator (strain ATCC 17699 / DSM 428 / KCTC 22496 / NCIMB 10442 / H16 / Stanier 337) (Ralstonia eutropha)).